The sequence spans 846 residues: Leucine--tRNA ligase (846 aa).

The 'HIGH' region signature appears at 42–52; that stretch reads PYPSGNLHMGH. The 'KMSKS' region motif lies at 586–590; it reads KMSKS. Lysine 589 lines the ATP pocket.

The protein belongs to the class-I aminoacyl-tRNA synthetase family.

It is found in the cytoplasm. It catalyses the reaction tRNA(Leu) + L-leucine + ATP = L-leucyl-tRNA(Leu) + AMP + diphosphate. This chain is Leucine--tRNA ligase, found in Heliobacterium modesticaldum (strain ATCC 51547 / Ice1).